Reading from the N-terminus, the 180-residue chain is Small ribosomal subunit protein uS5 (180 aa).

The S5 DRBM domain maps to 24–87 (MIEKLVAVNR…EQARKNLVSV (64 aa)).

This sequence belongs to the universal ribosomal protein uS5 family. As to quaternary structure, part of the 30S ribosomal subunit. Contacts proteins S4 and S8.

Its function is as follows. With S4 and S12 plays an important role in translational accuracy. Functionally, located at the back of the 30S subunit body where it stabilizes the conformation of the head with respect to the body. This is Small ribosomal subunit protein uS5 from Stenotrophomonas maltophilia (strain R551-3).